The following is a 239-amino-acid chain: ATP-dependent dethiobiotin synthetase BioD (239 aa).

13 to 18 provides a ligand contact to ATP; that stretch reads EIGKTV. Threonine 17 serves as a coordination point for Mg(2+). The active site involves lysine 38. A substrate-binding site is contributed by threonine 42. Mg(2+)-binding residues include lysine 59 and glutamate 111. ATP-binding positions include 111-114, 175-176, and 204-206; these read EGAG, NQ, and PSL.

This sequence belongs to the dethiobiotin synthetase family. As to quaternary structure, homodimer. Mg(2+) serves as cofactor.

The protein resides in the cytoplasm. It catalyses the reaction (7R,8S)-7,8-diammoniononanoate + CO2 + ATP = (4R,5S)-dethiobiotin + ADP + phosphate + 3 H(+). It functions in the pathway cofactor biosynthesis; biotin biosynthesis; biotin from 7,8-diaminononanoate: step 1/2. In terms of biological role, catalyzes a mechanistically unusual reaction, the ATP-dependent insertion of CO2 between the N7 and N8 nitrogen atoms of 7,8-diaminopelargonic acid (DAPA, also called 7,8-diammoniononanoate) to form a ureido ring. The polypeptide is ATP-dependent dethiobiotin synthetase BioD (Geobacillus sp. (strain WCH70)).